The sequence spans 111 residues: MKKDFHSTYYIIVVEDLESHHVIGTATLFLERKFLRGKGICGHIEEVIVHPDHQRKAIGKLMVLTLIKLAFSLNSYKVILDCSDSNVGFYEKCGLSRAGIEMKKYASHSII.

Residues 1–111 (MKKDFHSTYY…MKKYASHSII (111 aa)) enclose the N-acetyltransferase domain. Substrate is bound by residues 33–36 (KFLR) and 45–47 (EEV). Residues 47–49 (VIV) and 55–60 (RKAIGK) each bind acetyl-CoA. Substrate-binding positions include 76–77 (YK) and Asp-81. 90-92 (YEK) contacts acetyl-CoA.

It belongs to the acetyltransferase family. GNA1 subfamily.

The catalysed reaction is D-glucosamine 6-phosphate + acetyl-CoA = N-acetyl-D-glucosamine 6-phosphate + CoA + H(+). It participates in nucleotide-sugar biosynthesis; UDP-N-acetyl-alpha-D-glucosamine biosynthesis; N-acetyl-alpha-D-glucosamine 1-phosphate from alpha-D-glucosamine 6-phosphate (route I): step 1/2. The sequence is that of Glucosamine 6-phosphate N-acetyltransferase (gna1) from Schizosaccharomyces pombe (strain 972 / ATCC 24843) (Fission yeast).